We begin with the raw amino-acid sequence, 61 residues long: Alpha-conotoxin-like Sm1.1 (61 aa).

An N-terminal signal peptide occupies residues 1 to 16 (MFTVFLLVVLATTVVS). Residues 17-43 (FPSDRASDGRDDEAKDERSDMHESGRK) constitute a propeptide that is removed on maturation. Residues 19 to 46 (SDRASDGRDDEAKDERSDMHESGRKGRG) form a disordered region. The segment covering 21 to 42 (RASDGRDDEAKDERSDMHESGR) has biased composition (basic and acidic residues). Intrachain disulfides connect C48/C53 and C49/C59. Residue P55 is modified to 4-hydroxyproline; partial. C59 is modified (cysteine amide).

This sequence belongs to the conotoxin A superfamily. Expressed by the venom duct.

The protein localises to the secreted. Its function is as follows. Alpha-conotoxins act on postsynaptic membranes, they bind to the nicotinic acetylcholine receptors (nAChR) and thus inhibit them. In Conus stercusmuscarum (Fly-specked cone), this protein is Alpha-conotoxin-like Sm1.1.